A 411-amino-acid polypeptide reads, in one-letter code: Glutamate dehydrogenase 2, mitochondrial (411 aa).

The N-terminal 18 residues, 1–18, are a transit peptide targeting the mitochondrion; it reads MNALAATSRNFRQAARLL. Lys102 is a catalytic residue.

This sequence belongs to the Glu/Leu/Phe/Val dehydrogenases family. As to expression, expressed in roots. Expressed ubiquitously in various tissues.

It localises to the mitochondrion. The catalysed reaction is L-glutamate + NAD(+) + H2O = 2-oxoglutarate + NH4(+) + NADH + H(+). It carries out the reaction L-glutamate + NADP(+) + H2O = 2-oxoglutarate + NH4(+) + NADPH + H(+). This Oryza sativa subsp. japonica (Rice) protein is Glutamate dehydrogenase 2, mitochondrial (GDH2).